We begin with the raw amino-acid sequence, 277 residues long: Probable endonuclease 4 (277 aa).

Zn(2+)-binding residues include His67, His107, Glu141, Asp173, His176, His207, Asp220, His222, and Glu252.

The protein belongs to the AP endonuclease 2 family. Zn(2+) serves as cofactor.

It catalyses the reaction Endonucleolytic cleavage to 5'-phosphooligonucleotide end-products.. Endonuclease IV plays a role in DNA repair. It cleaves phosphodiester bonds at apurinic or apyrimidinic (AP) sites, generating a 3'-hydroxyl group and a 5'-terminal sugar phosphate. The sequence is that of Probable endonuclease 4 from Finegoldia magna (strain ATCC 29328 / DSM 20472 / WAL 2508) (Peptostreptococcus magnus).